A 601-amino-acid polypeptide reads, in one-letter code: Elongation factor 4 (601 aa).

The 183-residue stretch at 6-188 (DHIRNFSIVA…AIVHQLPPPR (183 aa)) folds into the tr-type G domain. Residues 18–23 (DHGKST) and 135–138 (NKVD) each bind GTP.

This sequence belongs to the TRAFAC class translation factor GTPase superfamily. Classic translation factor GTPase family. LepA subfamily.

The protein resides in the cell inner membrane. The catalysed reaction is GTP + H2O = GDP + phosphate + H(+). Required for accurate and efficient protein synthesis under certain stress conditions. May act as a fidelity factor of the translation reaction, by catalyzing a one-codon backward translocation of tRNAs on improperly translocated ribosomes. Back-translocation proceeds from a post-translocation (POST) complex to a pre-translocation (PRE) complex, thus giving elongation factor G a second chance to translocate the tRNAs correctly. Binds to ribosomes in a GTP-dependent manner. This chain is Elongation factor 4, found in Mesorhizobium japonicum (strain LMG 29417 / CECT 9101 / MAFF 303099) (Mesorhizobium loti (strain MAFF 303099)).